We begin with the raw amino-acid sequence, 319 residues long: Formimidoylglutamase (319 aa).

6 residues coordinate Mn(2+): His131, Asp154, His156, Asp158, Cys248, and Asp250.

It belongs to the arginase family. Mn(2+) serves as cofactor.

It catalyses the reaction N-formimidoyl-L-glutamate + H2O = formamide + L-glutamate. It participates in amino-acid degradation; L-histidine degradation into L-glutamate; L-glutamate from N-formimidoyl-L-glutamate (hydrolase route): step 1/1. Catalyzes the conversion of N-formimidoyl-L-glutamate to L-glutamate and formamide. This is Formimidoylglutamase from Legionella pneumophila subsp. pneumophila (strain Philadelphia 1 / ATCC 33152 / DSM 7513).